We begin with the raw amino-acid sequence, 345 residues long: SLAM family member 5 (345 aa).

An N-terminal signal peptide occupies residues 1-21 (MAQHHLWILLLCLQTWPEAAG). Residues 22 to 225 (KDSEIFTVNG…AMGFRTHHTG (204 aa)) lie on the Extracellular side of the membrane. One can recognise an Ig-like V-type domain in the interval 26-129 (IFTVNGILGE…TTKRYNLQIY (104 aa)). The 73-residue stretch at 135 to 207 (PKITQSLMAS…PVSNNSDSIS (73 aa)) folds into the Ig-like C2-type domain. N-linked (GlcNAc...) asparagine glycosylation is present at N150. C155 and C193 are joined by a disulfide. A helical transmembrane segment spans residues 226-246 (LLSVLAMFFLLVLILSSVFLF). Residues 247–345 (RLFKRRQGRI…PGTSSYEIVI (99 aa)) lie on the Cytoplasmic side of the membrane. The ITSM 1 motif lies at 277 to 282 (TIYTYI). At Y279 the chain carries Phosphotyrosine. Y296 is subject to Phosphotyrosine; by LYN. An ITSM 2 motif is present at residues 314–319 (TVYSEV). The residue at position 316 (Y316) is a Phosphotyrosine. The disordered stretch occupies residues 326-345 (GKASTQDSKPPGTSSYEIVI). Over residues 328–345 (ASTQDSKPPGTSSYEIVI) the composition is skewed to polar residues. Y341 is subject to Phosphotyrosine; by FES.

Homodimer; via its extracellular domain. Forms a head to tail dimer with a CD48 molecule from another cell. Interacts with SH2 domain-containing proteins SH2D1A/SAP and SH2D1B/EAT-2. Interacts with tyrosine-protein phosphatases PTPN6/SHP-1 and PTPN11//SHP-2 via its phosphorylated cytoplasmic domain, and this interaction is blocked by SH2D1A. Interacts (via phosphorylated ITSM 1 and 2) with INPP5D/SHIP1. In terms of processing, phosphorylated by tyrosine-protein kinase LCK on tyrosine residues following ligation induced by agonist monoclonal antibody. The association with SH2D1A is dependent of tyrosine phosphorylation of its cytoplasmic domain. Phosphorylated on Tyr-296 and Tyr-316 following platelet aggregation. Phosphorylated on tyrosine residues upon high affinity immunoglobulin epsilon receptor aggregation in mast cells. Post-translationally, N-glycosylated. In terms of tissue distribution, predominantly expressed in hematopoietic tissues, such as lymph node, spleen and peripheral leukocytes. Expressed in macrophages, B-cells, monocytes, platelets, thymocytes, T-cells and dendritic cells. Highly expressed in memory T-cells. Expressed in mast cells.

The protein localises to the cell membrane. Its function is as follows. Self-ligand receptor of the signaling lymphocytic activation molecule (SLAM) family. SLAM receptors triggered by homo- or heterotypic cell-cell interactions are modulating the activation and differentiation of a wide variety of immune cells and thus are involved in the regulation and interconnection of both innate and adaptive immune response. Activities are controlled by presence or absence of small cytoplasmic adapter proteins, SH2D1A/SAP and/or SH2D1B/EAT-2. Can mediate natural killer (NK) cell cytotoxicity dependent on SH2D1A and SH2D1B. Increases proliferative responses of activated T-cells and SH2D1A/SAP does not seem be required for this process. Homophilic interactions enhance interferon gamma/IFNG secretion in lymphocytes and induce platelet stimulation via a SH2D1A-dependent pathway. May serve as a marker for hematopoietic progenitor cells Required for a prolonged T-cell:B-cell contact, optimal T follicular helper function, and germinal center formation. In germinal centers involved in maintaining B-cell tolerance and in preventing autoimmunity. In mast cells negatively regulates high affinity immunoglobulin epsilon receptor signaling; independent of SH2D1A and SH2D1B but implicating FES and PTPN6/SHP-1. In macrophages enhances LPS-induced MAPK phosphorylation and NF-kappaB activation and modulates LPS-induced cytokine secretion; involving ITSM 2. Positively regulates macroautophagy in primary dendritic cells via stabilization of IRF8; inhibits TRIM21-mediated proteasomal degradation of IRF8. This is SLAM family member 5 (CD84) from Homo sapiens (Human).